Consider the following 148-residue polypeptide: Leghemoglobin-1 (148 aa).

In terms of domain architecture, Globin spans 2–146; it reads GFTDKQEALV…LATAIKKAMK (145 aa). Tyr24 and Tyr29 each carry nitrated tyrosine. Ser44 lines the heme b pocket. Residue Ser44 is modified to Phosphoserine. Residue His61 participates in O2 binding. The heme b site is built by His93 and Lys96. Nitrated tyrosine is present on Tyr134.

It belongs to the plant globin family. Monomer. Post-translationally, nitrated in effective nodules and particularly in hypoxic conditions; this mechanism may play a protective role in the symbiosis by buffering toxic peroxynitrite NO(2)(-). Nitration level decrease during nodule senescence. Phosphorylation at Ser-44 disrupts the molecular environment of its porphyrin ring oxygen binding pocket, thus leading to a reduced oxygen consumption and to the delivery of oxygen O(2) to symbiosomes. Root nodules.

The protein resides in the cytoplasm. It localises to the cytosol. The protein localises to the nucleus. Functionally, leghemoglobin that reversibly binds oxygen O(2) through a pentacoordinated heme iron. In root nodules, facilitates the diffusion of oxygen to the bacteroids while preventing the bacterial nitrogenase from being inactivated by buffering dioxygen, nitric oxide and carbon monoxide, and promoting the formation of reactive oxygen species (ROS, e.g. H(2)O(2)). This role is essential for symbiotic nitrogen fixation (SNF). The sequence is that of Leghemoglobin-1 from Pisum sativum (Garden pea).